Here is a 228-residue protein sequence, read N- to C-terminus: DNA mismatch repair protein MutH (228 aa).

The protein belongs to the MutH family.

The protein resides in the cytoplasm. Its function is as follows. Sequence-specific endonuclease that cleaves unmethylated GATC sequences. It is involved in DNA mismatch repair. The polypeptide is DNA mismatch repair protein MutH (Photorhabdus laumondii subsp. laumondii (strain DSM 15139 / CIP 105565 / TT01) (Photorhabdus luminescens subsp. laumondii)).